The sequence spans 38 residues: RapG inhibitor (38 aa).

Residues 1–33 constitute a propeptide that is removed on maturation; the sequence is MKRFLIGAGVAAVILSGWFIADHQTHSQEMKVA.

Belongs to the Phr family. In terms of processing, contains a predicted signal peptide cleavage site in the N-terminal region, however the propeptide is probably subject to only one processing event, at the N-terminal end of the mature peptide.

It localises to the secreted. Its subcellular location is the cytoplasm. In terms of biological role, signaling molecule involved in the regulation of expression of DegU-controlled genes. Secreted during production, but the mature peptide acts intracellularly, indicating that it needs to be imported into the cell to function. Stimulates the DegU-dependent expression of aprE, an extracellular alkaline protease. Acts by inhibiting RapG activity. At high concentrations, represses the DegS-dependent aprE expression. This Bacillus subtilis (strain 168) protein is RapG inhibitor (phrG).